Reading from the N-terminus, the 79-residue chain is Dermaseptin-S8 (79 aa).

Residues 1-22 (MDILKKSLFLVLFLGLVSLSIC) form the signal peptide. Residues 23–45 (EEEKRENEDEEKQEDDEQSEMKR) constitute a propeptide that is removed on maturation. Glutamine 76 carries the post-translational modification Glutamine amide. A propeptide spanning residues 78–79 (AQ) is cleaved from the precursor.

This sequence belongs to the frog skin active peptide (FSAP) family. Dermaseptin subfamily. In terms of tissue distribution, expressed by the skin glands.

It localises to the secreted. Functionally, potent antimicrobial peptide with activity against bacteria, fungi and protozoa. Probably acts by disturbing membrane functions with its amphipathic structure. This Phyllomedusa sauvagei (Sauvage's leaf frog) protein is Dermaseptin-S8.